A 98-amino-acid chain; its full sequence is MTPLNINLTMAFFLALAGVLIYRSHLMSTLLCLEGMMLSLFILLSLLISHFHMLSSSMAPLILLVFSACEAGVGLALLVKMSSNYGNDYVQNLNLLQC.

The next 3 helical transmembrane spans lie at 1–21, 28–48, and 59–79; these read MTPL…GVLI, STLL…SLLI, and APLI…ALLV.

It belongs to the complex I subunit 4L family. As to quaternary structure, core subunit of respiratory chain NADH dehydrogenase (Complex I) which is composed of 45 different subunits.

It is found in the mitochondrion inner membrane. The catalysed reaction is a ubiquinone + NADH + 5 H(+)(in) = a ubiquinol + NAD(+) + 4 H(+)(out). In terms of biological role, core subunit of the mitochondrial membrane respiratory chain NADH dehydrogenase (Complex I) which catalyzes electron transfer from NADH through the respiratory chain, using ubiquinone as an electron acceptor. Part of the enzyme membrane arm which is embedded in the lipid bilayer and involved in proton translocation. This chain is NADH-ubiquinone oxidoreductase chain 4L (MT-ND4L), found in Tarsipes rostratus (Honey possum).